The chain runs to 731 residues: Ribonuclease R (731 aa).

The RNB domain occupies 260–589; the sequence is RTDLRHFPFF…LHRVIKYLLF (330 aa). The S1 motif domain occupies 647 to 728; it reads GCILNGVISN…NEKKIELSLY (82 aa).

Belongs to the RNR ribonuclease family. RNase R subfamily. As to quaternary structure, monomer.

The protein resides in the cytoplasm. It carries out the reaction Exonucleolytic cleavage in the 3'- to 5'-direction to yield nucleoside 5'-phosphates.. Its function is as follows. 3'-5' exoribonuclease that releases 5'-nucleoside monophosphates and is involved in maturation of structured RNAs. The protein is Ribonuclease R of Buchnera aphidicola subsp. Acyrthosiphon pisum (strain APS) (Acyrthosiphon pisum symbiotic bacterium).